A 149-amino-acid chain; its full sequence is Flagellar assembly factor FliW (149 aa).

This sequence belongs to the FliW family. In terms of assembly, interacts with translational regulator CsrA and flagellin(s).

The protein resides in the cytoplasm. Functionally, acts as an anti-CsrA protein, binds CsrA and prevents it from repressing translation of its target genes, one of which is flagellin. Binds to flagellin and participates in the assembly of the flagellum. In Thermotoga petrophila (strain ATCC BAA-488 / DSM 13995 / JCM 10881 / RKU-1), this protein is Flagellar assembly factor FliW.